A 133-amino-acid chain; its full sequence is Small ribosomal subunit protein uS9 (133 aa).

Basic and acidic residues predominate over residues 98–113; the sequence is RKPLKTEGHLSRDPRA. A disordered region spans residues 98-133; the sequence is RKPLKTEGHLSRDPRAKERRKYGLKKARKAPQFSKR. Residues 114–133 are compositionally biased toward basic residues; the sequence is KERRKYGLKKARKAPQFSKR.

Belongs to the universal ribosomal protein uS9 family.

The sequence is that of Small ribosomal subunit protein uS9 from Parasynechococcus marenigrum (strain WH8102).